We begin with the raw amino-acid sequence, 152 residues long: Large ribosomal subunit protein bL9 (152 aa).

Belongs to the bacterial ribosomal protein bL9 family.

Its function is as follows. Binds to the 23S rRNA. In Chlorobaculum tepidum (strain ATCC 49652 / DSM 12025 / NBRC 103806 / TLS) (Chlorobium tepidum), this protein is Large ribosomal subunit protein bL9.